The sequence spans 242 residues: UPF0309 protein BSUIS_B0903 (242 aa).

An SIS domain is found at alanine 30 to proline 214.

This sequence belongs to the UPF0309 family.

In Brucella suis (strain ATCC 23445 / NCTC 10510), this protein is UPF0309 protein BSUIS_B0903.